The primary structure comprises 231 residues: Thiamine import ATP-binding protein ThiQ (231 aa).

Residues 2 to 230 enclose the ABC transporter domain; the sequence is LHLDRLLIRQ…PPPALRAYLG (229 aa). 32-39 contributes to the ATP binding site; the sequence is GPSGGGKS.

The protein belongs to the ABC transporter superfamily. Thiamine importer (TC 3.A.1.19.1) family. As to quaternary structure, the complex is composed of two ATP-binding proteins (ThiQ), two transmembrane proteins (ThiP) and a solute-binding protein (ThiB).

Its subcellular location is the cell inner membrane. It catalyses the reaction thiamine(out) + ATP + H2O = thiamine(in) + ADP + phosphate + H(+). Functionally, part of the ABC transporter complex ThiBPQ involved in thiamine import. Responsible for energy coupling to the transport system. In Cereibacter sphaeroides (strain ATCC 17023 / DSM 158 / JCM 6121 / CCUG 31486 / LMG 2827 / NBRC 12203 / NCIMB 8253 / ATH 2.4.1.) (Rhodobacter sphaeroides), this protein is Thiamine import ATP-binding protein ThiQ.